Here is a 185-residue protein sequence, read N- to C-terminus: ATP synthase subunit delta (185 aa).

The protein belongs to the ATPase delta chain family. As to quaternary structure, F-type ATPases have 2 components, F(1) - the catalytic core - and F(0) - the membrane proton channel. F(1) has five subunits: alpha(3), beta(3), gamma(1), delta(1), epsilon(1). CF(0) has four main subunits: a(1), b(1), b'(1) and c(10-14). The alpha and beta chains form an alternating ring which encloses part of the gamma chain. F(1) is attached to F(0) by a central stalk formed by the gamma and epsilon chains, while a peripheral stalk is formed by the delta, b and b' chains.

The protein localises to the cellular thylakoid membrane. Its function is as follows. F(1)F(0) ATP synthase produces ATP from ADP in the presence of a proton or sodium gradient. F-type ATPases consist of two structural domains, F(1) containing the extramembraneous catalytic core and F(0) containing the membrane proton channel, linked together by a central stalk and a peripheral stalk. During catalysis, ATP synthesis in the catalytic domain of F(1) is coupled via a rotary mechanism of the central stalk subunits to proton translocation. In terms of biological role, this protein is part of the stalk that links CF(0) to CF(1). It either transmits conformational changes from CF(0) to CF(1) or is implicated in proton conduction. This is ATP synthase subunit delta from Crocosphaera subtropica (strain ATCC 51142 / BH68) (Cyanothece sp. (strain ATCC 51142)).